Here is a 2643-residue protein sequence, read N- to C-terminus: MPKGGCSKTPQQEDFALSNDMVEKQTGKKDKDKVSLTKTPKLDRSDGGKEVRERATKRKLPFTVGANGEQKDSDTEKQGPERKRIKKEPVARKSGLLFGMGLSGIRAGYPLSERQQVALLMQMTAEESANSPVDTTPKHPSQSTVCQKGTPNSASKTKDKVNKRNERGETRLHRAAIRGDARRIKELISEGADVNVKDFAGWTALHEACNRGYYDIAKQLLAAGAEVNTKGLDDDTPLHDAANNGHYKVVKLLLRYGGNPQQSNRKGETPLKVANSPTMVNLLLGKGTYTSSEESSTESSEEEDAPSFAPSSSVDGNNTDSEFEKGLKLKAKNPEPQKTVTPVKDEYEFDEDDEQDRVPPVDDKHLLKKDYRKEAKANSFISIPKMEVKSYSKNNTLAPKKAAHRILSDTSDEEDVSVSIGAGEKLRLSAHTMLPGSKARESSSSRQQKEKNKLKKKRKKETKGKEVRFGKRSDKFCSSGSESESSESEEDDGDSVGSSGCLKGSPLVLKDPSLFSSLSASSTSSHGSAVAQKHGSGHTDQHTKHWRTDNWKAISSPAWSEVSSLSDSSRTGLTSESDCSSEGSSVESLKPTRRKQEHRKRGVLQSAPSEKRSSFHPCTDGAVPKLDKEGKVVKKHKTKHKHKHKEKGQCSVSQELKLKSFTYEYEDSKQKSDKAILLESDLSTENKLKVLKHDREHLKKEDKLGRMKPEDKDWLFKDEKVLKRIKDANKDMSRAFREDKDRASKAERERATKDKSPKEEKLRLYKEERKKKSKDRASRLERKNDMKEDKLSKEKEKAFKEDKEKLKKEKLYREDAAFDDYCNKSQFLDHEDTKFSLSDDQQERWFSDLSDSSFDFKGEDSWDSVTDYRDIKNDSVAKLILETVKEDSKEKKRDNKIREKRDFKDSFFRKRDRDCLDKNSEKRRDQTEKHKSIPSYLSEKDKKRRESAEGGRDRRDGRIRSEEVHREDLKECGFESSFKDKSDCDFPKNLEPWERPHAAREKEKKDALEKERKEKGRADKYKEKSSERERSDKSTLDKCQKDKEFEKCFKEKKDGKEKHKDIHSKDRKASFDQLREKKEKVFSSIISEDFSERKDDRKGKEKSWYIADIFTDESEDEKDDCVAGSFKATEASDTQRVDGLPEKEEGREHPSDRHRKSSSDRQHTEKPRDKEPKEKKKDRGASEGGKDKKEKMEKIFEKHKEKKDKECAERYKDRKERASADSAPEKKNKQKLPEKVEKKHFAEDKVKSKHKEKPEKEHSRERERKPSRGPDVEKSLLEKLEEEALHDYREDSNDKISEVSSDSFADHGQEPSLSTLLEVSFSEPPAEDKARDSACLSEKLREKERHRHSSSSSKKSHERERAKKEKAEKKEKSEDYKDSISSVRKDASQFEKDFLDAETYGVSYPTKADVEEELDKAIELFSSEKKDRSDPEREPAKRIEKELKPYGSSAISILKEKKKREKHRERWREEKERHRDKHVDGFLRHHKDEPKPAAKDKDNPPNSFKEKSREESLKLSETKLKEKFKENTEREKGDSIKMSNGNDKLVPSRDSGKKDSRPREKLLGDGDLMMTSFERMLSQKDLEIEERHKRHKERMKQMEKMRHRSGDPKLKEKKPTEDGRKKSLDFPSKKALGLDKKVKEPAPTLTTGESKPHSGPGTESKDWLSGQPLKEVLPASPRTEQSRPTGVPTPTSVVSCPSYEEVMHTPRTPSCSADDYPDLVFDCTDSQHSMPVSTASTSACSPPFFDRFSVASSVVSENAAGQTPTRPISTNLYRSISVDIRRTPEEEFSAGDKLFRQQSVPAPSSFDSPVQHLLEEKAPLPPVPAEKFACLSPGYYSPDYGIPSPKVDTLHCPPTAVVSATPPPDSVFSNLPPKSSPSPRGELLSPAIEGTLPPDLGLPLDATEDQQATAAILPQEPSYLEPLDEGPFTTVITEEPVEWTHTAAEQGLSSSSLIASASENPVSWPVGSELMLKSPQRFAESPKHFCPGESLHSTTPGPYSAAEPTYPVSPGSYPLPAPEPALEEVKDGGTGAIPVAISAAEGAAPYAAPARLESFFSNCKSHPDAPLDTAPEPTGVTAVAQVEALGPLESSFLDSNPSISTLSQVEPVSWHEAFTSPEDDLDLGPFSLPELPLQAKDASDVEAEAAKASPVPPAESPPGPTGVLGGGDVPAPAAEEPPAPPPQEASPQLSTEPEPSEEPKLDVVLEATVETEVLADDSAPEASISNSVPAPSPPQQQPPGGGDEEAETEDPSATPCCAPDGPTTDGLAQAHNSAEASCVVAAAEGPPGNVQAEATDPEPKPTSEVPKAPKVEEVPQRMTRNRAQMLASQSKQGIPAAEKDPMPTPASRAKGRASEEEDAQAQHPRKRRFQRSSQQLQQQLNTSTQQTREVIQQTLAAIVDAIKLDAIEPYHSDRSNPYFEYLQIRKKIEEKRKILCCITPQAPQCYAEYVTYTGSYLLDGKPLSKLHIPVIAPPPSLAEPLKELFKQQEAVRGKLRLQHSIEREKLIVSCEQEILRVHCRAARTIANQAVPFSACTMLLDSEVYNMPLESQGDENKSVRDRFNARQFISWLQDVDDKYDRMKTCLLMRQQHEAAALNAVQRMEWQLKAQELDPAGHKSLCVNEVPSFYVPMVDVNDDFVLLPA.

Disordered regions lie at residues 1–90 and 128–170; these read MPKG…KEPV and SANS…RGET. Composition is skewed to basic and acidic residues over residues 21–54 and 69–90; these read MVEKQTGKKDKDKVSLTKTPKLDRSDGGKEVRER and EQKDSDTEKQGPERKRIKKEPV. Polar residues predominate over residues 128-155; sequence SANSPVDTTPKHPSQSTVCQKGTPNSAS. A compositionally biased stretch (basic and acidic residues) spans 156–170; it reads KTKDKVNKRNERGET. ANK repeat units follow at residues 167 to 196, 200 to 229, 233 to 262, and 266 to 292; these read RGETRLHRAAIRGDARRIKELISEGADVNV, AGWTALHEACNRGYYDIAKQLLAAGAEVNT, DDDTPLHDAANNGHYKVVKLLLRYGGNPQQ, and KGETPLKVANSPTMVNLLLGKGTYTSS. Residue S276 is modified to Phosphoserine. Residues 289-365 are disordered; sequence YTSSEESSTE…DRVPPVDDKH (77 aa). Over residues 295 to 305 the composition is skewed to acidic residues; sequence SSTESSEEEDA. Polar residues predominate over residues 309–320; that stretch reads APSSSVDGNNTD. 2 stretches are compositionally biased toward basic and acidic residues: residues 322-335 and 356-365; these read EFEKGLKLKAKNPE and DRVPPVDDKH. The residue at position 408 (S408) is a Phosphoserine. At T410 the chain carries Phosphothreonine. Position 411 is a phosphoserine (S411). 3 disordered regions span residues 423–504, 517–651, and 727–805; these read GEKL…CLKG, SLSA…GQCS, and DANK…DKEK. A compositionally biased stretch (basic and acidic residues) spans 438 to 451; it reads KARESSSSRQQKEK. Basic residues predominate over residues 452 to 462; sequence NKLKKKRKKET. Residues 463–475 show a composition bias toward basic and acidic residues; sequence KGKEVRFGKRSDK. The segment covering 484-494 has biased composition (acidic residues); it reads ESSESEEDDGD. A compositionally biased stretch (low complexity) spans 517–528; the sequence is SLSASSTSSHGS. The span at 537 to 550 shows a compositional bias: basic and acidic residues; it reads GHTDQHTKHWRTDN. Residues 557 to 574 show a composition bias toward polar residues; that stretch reads PAWSEVSSLSDSSRTGLT. Over residues 575-588 the composition is skewed to low complexity; the sequence is SESDCSSEGSSVES. Composition is skewed to basic residues over residues 591-602 and 633-646; these read PTRRKQEHRKRG and VKKHKTKHKHKHKE. S838 carries the post-translational modification Phosphoserine. 2 stretches are compositionally biased toward basic and acidic residues: residues 918–931 and 938–962; these read KNSEKRRDQTEKHK and SEKDKKRRESAEGGRDRRDGRIRSE. Disordered stretches follow at residues 918–962, 977–1037, and 1051–1074; these read KNSE…IRSE, SFKD…STLD, and EKKDGKEKHKDIHSKDRKASFDQL. Phosphoserine is present on S1070. T1111 is subject to Phosphothreonine. The residue at position 1114 (S1114) is a Phosphoserine. Disordered stretches follow at residues 1114–1388 and 1420–1711; these read SEDE…KDAS and LFSS…TPSC. Basic and acidic residues-rich tracts occupy residues 1133 to 1297, 1326 to 1343, 1355 to 1388, 1420 to 1444, 1464 to 1535, 1546 to 1564, 1577 to 1587, and 1595 to 1640; these read DTQR…DKIS, AEDKARDSACLSEKLREK, KSHERERAKKEKAEKKEKSEDYKDSISSVRKDAS, LFSSEKKDRSDPEREPAKRIEKELK, RERW…KGDS, VPSRDSGKKDSRPREKLLG, LSQKDLEIEER, and MKQM…KVKE. S1676 carries the post-translational modification Phosphoserine. The segment covering 1678-1695 has biased composition (polar residues); the sequence is RTEQSRPTGVPTPTSVVS. A phosphoserine mark is found at S1777 and S1832. Residues Y1835 and Y1836 each carry the phosphotyrosine modification. S1837 and S1844 each carry phosphoserine. 3 disordered regions span residues 1863–1900, 1981–2027, and 2111–2386; these read PPDSVFSNLPPKSSPSPRGELLSPAIEGTLPPDLGLPL, SPKH…EVKD, and HEAF…STQQ. Phosphoserine is present on residues S1981 and S2139. Composition is skewed to pro residues over residues 2150–2160 and 2175–2184; these read PVPPAESPPGP and EEPPAPPPQE. Residues 2273 to 2284 show a composition bias toward low complexity; that stretch reads SAEASCVVAAAE. Positions 2297-2315 are enriched in basic and acidic residues; the sequence is PEPKPTSEVPKAPKVEEVP. The interval 2349 to 2643 is important for protein degradation; sequence AKGRASEEED…VNDDFVLLPA (295 aa). A compositionally biased stretch (low complexity) spans 2371–2386; it reads RSSQQLQQQLNTSTQQ.

As to quaternary structure, interacts with the PAS region of the p160 coactivators. In terms of processing, subject to proteasomal degradation which is probably essential to regulate its activity.

It localises to the nucleus. Its function is as follows. Chromatin regulator which modulates histone acetylation and gene expression in neural precursor cells. May recruit histone deacetylases (HDACs) to the p160 coactivators/nuclear receptor complex to inhibit ligand-dependent transactivation. Has a role in proliferation and development of cortical neural precursors. May also regulate bone homeostasis. The sequence is that of Ankyrin repeat domain-containing protein 11 from Mus musculus (Mouse).